The following is a 1434-amino-acid chain: Inositol hexakisphosphate and diphosphoinositol-pentakisphosphate kinase 1 (1434 aa).

66-67 lines the substrate pocket; the sequence is KK. ATP is bound by residues arginine 147, lysine 200, histidine 207, arginine 226, 250–253, and 259–261; these read EEFM and DVK. Position 226–227 (226–227) interacts with substrate; it reads RK. Residues lysine 261 and arginine 275 each coordinate substrate. ATP is bound by residues serine 277, aspartate 322, and 334–336; that span reads DVN. Residue 339–342 coordinates substrate; the sequence is SFVK. Residues 384–455 form a polyphosphoinositide-binding domain region; that stretch reads PTTSGTMMEL…VLDITRLLLA (72 aa). Residues 916–1017 are disordered; sequence EGSAPAGCGF…PTEMKQSGLG (102 aa). Phosphoserine is present on residues serine 941 and serine 984. Over residues 1002–1017 the composition is skewed to polar residues; it reads FSSSRPPTEMKQSGLG. Serine 1034, serine 1070, serine 1142, and serine 1149 each carry phosphoserine. Disordered stretches follow at residues 1133–1193, 1228–1251, and 1396–1434; these read NHQA…GFSD, ESTQSPQEPPVEISPPGSQDDTEV, and TDNPSQELSEETDLQAQEVSEEIDQEPEVVDELSNEDIS. A compositionally biased stretch (low complexity) spans 1165-1183; that stretch reads SSGPSSTVSSAGPSSPTTV. Positions 1403 to 1434 are enriched in acidic residues; it reads LSEETDLQAQEVSEEIDQEPEVVDELSNEDIS.

The protein belongs to the histidine acid phosphatase family. VIP1 subfamily.

It localises to the cytoplasm. It is found in the cytosol. The protein resides in the cell membrane. The catalysed reaction is 1D-myo-inositol hexakisphosphate + ATP = 1-diphospho-1D-myo-inositol 2,3,4,5,6-pentakisphosphate + ADP. It catalyses the reaction 5-diphospho-1D-myo-inositol 1,2,3,4,6-pentakisphosphate + ATP + H(+) = 1,5-bis(diphospho)-1D-myo-inositol 2,3,4,6-tetrakisphosphate + ADP. In terms of biological role, bifunctional inositol kinase that acts in concert with the IP6K kinases IP6K1, IP6K2 and IP6K3 to synthesize the diphosphate group-containing inositol pyrophosphates diphosphoinositol pentakisphosphate, PP-InsP5, and bis-diphosphoinositol tetrakisphosphate, (PP)2-InsP4. PP-InsP5 and (PP)2-InsP4, also respectively called InsP7 and InsP8, regulate a variety of cellular processes, including apoptosis, vesicle trafficking, cytoskeletal dynamics, exocytosis, insulin signaling and neutrophil activation. Phosphorylates inositol hexakisphosphate (InsP6) at position 1 to produce PP-InsP5 which is in turn phosphorylated by IP6Ks to produce (PP)2-InsP4. Alternatively, phosphorylates PP-InsP5 at position 1, produced by IP6Ks from InsP6, to produce (PP)2-InsP4. Activated when cells are exposed to hyperosmotic stress. This chain is Inositol hexakisphosphate and diphosphoinositol-pentakisphosphate kinase 1, found in Rattus norvegicus (Rat).